A 564-amino-acid chain; its full sequence is Septation ring formation regulator EzrA (564 aa).

At 1–4 (MVLF) the chain is on the extracellular side. The chain crosses the membrane as a helical span at residues 5–23 (IILAILVVILIAIGVLFYM). Residues 24 to 564 (RSNKRNLIEK…KHIEEQVIKE (541 aa)) are Cytoplasmic-facing. Coiled-coil stretches lie at residues 84–126 (VEEK…HQVT), 165–223 (EAAE…LIRE), 271–303 (MISR…YEVK), and 350–435 (VRQF…RRLL).

Belongs to the EzrA family.

Its subcellular location is the cell membrane. Negative regulator of FtsZ ring formation; modulates the frequency and position of FtsZ ring formation. Inhibits FtsZ ring formation at polar sites. Interacts either with FtsZ or with one of its binding partners to promote depolymerization. The protein is Septation ring formation regulator EzrA of Staphylococcus epidermidis (strain ATCC 35984 / DSM 28319 / BCRC 17069 / CCUG 31568 / BM 3577 / RP62A).